The sequence spans 234 residues: HTH-type transcriptional regulator SmoD (234 aa).

An HTH gntR-type domain is found at 8 to 76 (LPMYMQIAEM…QGSGNYIRAV (69 aa)). A DNA-binding region (H-T-H motif) is located at residues 36–55 (ERDMAADLGIAVGTLRKSLA).

Its subcellular location is the cytoplasm. Probably regulates expression of genes involved in the sulfoquinovose monooxygenase (sulfo-SMO) pathway (smoABCDEFGHI). This chain is HTH-type transcriptional regulator SmoD, found in Agrobacterium fabrum (strain C58 / ATCC 33970) (Agrobacterium tumefaciens (strain C58)).